A 102-amino-acid chain; its full sequence is NADH-quinone oxidoreductase subunit K 1 (102 aa).

3 consecutive transmembrane segments (helical) span residues 5-25 (LYEV…CVVA), 30-50 (VIMM…TFVG), and 62-82 (VFSL…LAMV).

The protein belongs to the complex I subunit 4L family. As to quaternary structure, NDH-1 is composed of 14 different subunits. Subunits NuoA, H, J, K, L, M, N constitute the membrane sector of the complex.

The protein resides in the cell inner membrane. The catalysed reaction is a quinone + NADH + 5 H(+)(in) = a quinol + NAD(+) + 4 H(+)(out). Functionally, NDH-1 shuttles electrons from NADH, via FMN and iron-sulfur (Fe-S) centers, to quinones in the respiratory chain. The immediate electron acceptor for the enzyme in this species is believed to be ubiquinone. Couples the redox reaction to proton translocation (for every two electrons transferred, four hydrogen ions are translocated across the cytoplasmic membrane), and thus conserves the redox energy in a proton gradient. The chain is NADH-quinone oxidoreductase subunit K 1 from Geobacter sp. (strain M21).